The chain runs to 211 residues: tRNA (guanine-N(7)-)-methyltransferase (211 aa).

S-adenosyl-L-methionine contacts are provided by Glu44, Asp69, Asp96, and Asp118. Asp118 is an active-site residue. Substrate is bound at residue Lys122. Residues 124–129 form an interaction with RNA region; that stretch reads RHEKRR. Residues Asp154 and 191–194 each bind substrate; that span reads TEYE.

The protein belongs to the class I-like SAM-binding methyltransferase superfamily. TrmB family.

It catalyses the reaction guanosine(46) in tRNA + S-adenosyl-L-methionine = N(7)-methylguanosine(46) in tRNA + S-adenosyl-L-homocysteine. The protein operates within tRNA modification; N(7)-methylguanine-tRNA biosynthesis. Functionally, catalyzes the formation of N(7)-methylguanine at position 46 (m7G46) in tRNA. The chain is tRNA (guanine-N(7)-)-methyltransferase from Streptococcus pneumoniae (strain JJA).